A 296-amino-acid polypeptide reads, in one-letter code: 4-diphosphocytidyl-2-C-methyl-D-erythritol kinase (296 aa).

Lysine 13 is a catalytic residue. An ATP-binding site is contributed by 98–108 (PVAAGIGGGSA). Aspartate 140 is an active-site residue.

It belongs to the GHMP kinase family. IspE subfamily.

The catalysed reaction is 4-CDP-2-C-methyl-D-erythritol + ATP = 4-CDP-2-C-methyl-D-erythritol 2-phosphate + ADP + H(+). It participates in isoprenoid biosynthesis; isopentenyl diphosphate biosynthesis via DXP pathway; isopentenyl diphosphate from 1-deoxy-D-xylulose 5-phosphate: step 3/6. Its function is as follows. Catalyzes the phosphorylation of the position 2 hydroxy group of 4-diphosphocytidyl-2C-methyl-D-erythritol. This chain is 4-diphosphocytidyl-2-C-methyl-D-erythritol kinase, found in Rhodopseudomonas palustris (strain HaA2).